The primary structure comprises 102 residues: uncharacterized protein (102 aa).

Residues 1–71 (MKRMIRSHGR…GSANETSACT (71 aa)) are disordered. Topologically, residues 1 to 79 (MKRMIRSHGR…CTRTDHQKAD (79 aa)) are extracellular. The span at 56 to 71 (SSGTRRGSANETSACT) shows a compositional bias: polar residues. An N-linked (GlcNAc...) asparagine; by host glycan is attached at Asn65. A helical membrane pass occupies residues 80 to 97 (IGLWFMFLVFGLCSWLAM). Residues 98–102 (RYRAQ) lie on the Cytoplasmic side of the membrane.

This sequence belongs to the HHV-5 UL15A protein family.

Its subcellular location is the host membrane. This is an uncharacterized protein from Human cytomegalovirus (strain AD169) (HHV-5).